Consider the following 445-residue polypeptide: Glutamyl-tRNA(Gln) amidotransferase subunit D (445 aa).

In terms of domain architecture, Asparaginase/glutaminase spans 93-425 (SEIKIISTGG…EKIRSLMISN (333 aa)). Catalysis depends on residues threonine 103, threonine 179, aspartate 180, and lysine 258.

Belongs to the asparaginase 1 family. GatD subfamily. In terms of assembly, heterodimer of GatD and GatE.

The enzyme catalyses L-glutamyl-tRNA(Gln) + L-glutamine + ATP + H2O = L-glutaminyl-tRNA(Gln) + L-glutamate + ADP + phosphate + H(+). Its function is as follows. Allows the formation of correctly charged Gln-tRNA(Gln) through the transamidation of misacylated Glu-tRNA(Gln) in organisms which lack glutaminyl-tRNA synthetase. The reaction takes place in the presence of glutamine and ATP through an activated gamma-phospho-Glu-tRNA(Gln). The GatDE system is specific for glutamate and does not act on aspartate. This chain is Glutamyl-tRNA(Gln) amidotransferase subunit D, found in Saccharolobus islandicus (strain L.S.2.15 / Lassen #1) (Sulfolobus islandicus).